Consider the following 324-residue polypeptide: UDP-galactose transporter homolog 1 (324 aa).

2 helical membrane-spanning segments follow: residues 7-27 (LVIA…AQEP) and 42-62 (HSSF…LCYL). The N-linked (GlcNAc...) asparagine glycan is linked to N97. The next 7 helical transmembrane spans lie at 106-126 (VGYM…HVLV), 135-155 (KALV…GGAE), 161-181 (ASLY…LTNA), 199-219 (HLMV…LVLF), 237-257 (ILTY…FVFF), 265-285 (LVLA…SIVV), and 290-310 (VRPV…WETV).

It belongs to the nucleotide-sugar transporter family. SLC35B subfamily.

The protein localises to the endoplasmic reticulum membrane. Its function is as follows. May be involved in specific transport of UDP-Gal from the cytosol to the Golgi lumen. Involved in the maintenance of optimal conditions for the folding of secretory pathway proteins in the endoplasmic reticulum. The sequence is that of UDP-galactose transporter homolog 1 (HUT1) from Eremothecium gossypii (strain ATCC 10895 / CBS 109.51 / FGSC 9923 / NRRL Y-1056) (Yeast).